We begin with the raw amino-acid sequence, 462 residues long: FAD-dependent monooxygenase opaC (462 aa).

N-linked (GlcNAc...) asparagine glycosylation occurs at asparagine 10. A helical transmembrane segment spans residues 14-34; sequence ITVIIIGLGIGGLTAAISCHL. Aspartate 43 provides a ligand contact to FAD. A glycan (N-linked (GlcNAc...) asparagine) is linked at asparagine 60. FAD is bound at residue arginine 115. Arginine 193 is a catalytic residue. FAD-binding residues include aspartate 322 and alanine 335.

It belongs to the paxM FAD-dependent monooxygenase family. The cofactor is FAD.

It is found in the membrane. The protein operates within secondary metabolite biosynthesis. FAD-dependent monooxygenase; part of the gene cluster that mediates the biosynthesis of oxepinamides, derivatives of anthranilyl-containing tripeptides that share an oxepin ring and a fused pyrimidinone moiety. The nonribosomal peptide synthetase (NRPS) opaA assembles the quinazolinone core with D-Phe incorporation. The first adenylation domain (A1) of opaA loads and activates anthranilic acid whereas the second A domain (A2) is for activating of L-Phe, which is then converted to D-form by the E domain. The third A domain (A3) is responsible for L-Ile activation and the terminal condensation domain C3 for cyclization and releasing the NRPS product protuboxepin K. The cytochrome P450 monooxygenase opaB then catalyzes alone the oxepin ring formation to convert protuboxepin K into protuboxepin A. The flavoenzyme opaC installs subsequently one hydroxyl group at the oxepin ring, accompanied by double bond migration, to form 15-epi-oxepinamide E. The epimerase opaE changes the D-Phe residue back to L-form, leading to oxepinamide E, which is further methylated at the hydroxyl group at C-12 by the O-methyltransferase OpaF to yield oxepinamide F. The chain is FAD-dependent monooxygenase opaC from Aspergillus ustus.